A 631-amino-acid polypeptide reads, in one-letter code: UvrABC system protein C (631 aa).

The interval 1–20 (MKNETEAVADQPPKTGPVKP) is disordered. The GIY-YIG domain occupies 34–112 (MSPGVYRMLD…IKQLKPKFNV (79 aa)). In terms of domain architecture, UVR spans 222–257 (TDLQRQLADGMAAASEAMEFERAAALRDRIRALTNV).

Belongs to the UvrC family. In terms of assembly, interacts with UvrB in an incision complex.

Its subcellular location is the cytoplasm. Its function is as follows. The UvrABC repair system catalyzes the recognition and processing of DNA lesions. UvrC both incises the 5' and 3' sides of the lesion. The N-terminal half is responsible for the 3' incision and the C-terminal half is responsible for the 5' incision. This is UvrABC system protein C from Jannaschia sp. (strain CCS1).